Consider the following 217-residue polypeptide: Protein-L-isoaspartate O-methyltransferase (217 aa).

Serine 61 is a catalytic residue.

It belongs to the methyltransferase superfamily. L-isoaspartyl/D-aspartyl protein methyltransferase family.

Its subcellular location is the cytoplasm. The catalysed reaction is [protein]-L-isoaspartate + S-adenosyl-L-methionine = [protein]-L-isoaspartate alpha-methyl ester + S-adenosyl-L-homocysteine. Functionally, catalyzes the methyl esterification of L-isoaspartyl residues in peptides and proteins that result from spontaneous decomposition of normal L-aspartyl and L-asparaginyl residues. It plays a role in the repair and/or degradation of damaged proteins. The protein is Protein-L-isoaspartate O-methyltransferase of Brucella anthropi (strain ATCC 49188 / DSM 6882 / CCUG 24695 / JCM 21032 / LMG 3331 / NBRC 15819 / NCTC 12168 / Alc 37) (Ochrobactrum anthropi).